Reading from the N-terminus, the 382-residue chain is ATP phosphoribosyltransferase regulatory subunit (382 aa).

Belongs to the class-II aminoacyl-tRNA synthetase family. HisZ subfamily. In terms of assembly, heteromultimer composed of HisG and HisZ subunits.

The protein resides in the cytoplasm. The protein operates within amino-acid biosynthesis; L-histidine biosynthesis; L-histidine from 5-phospho-alpha-D-ribose 1-diphosphate: step 1/9. Functionally, required for the first step of histidine biosynthesis. May allow the feedback regulation of ATP phosphoribosyltransferase activity by histidine. The chain is ATP phosphoribosyltransferase regulatory subunit from Burkholderia ambifaria (strain MC40-6).